A 542-amino-acid polypeptide reads, in one-letter code: Chaperonin GroEL (542 aa).

ATP-binding positions include 29 to 32, lysine 50, 86 to 90, glycine 414, 477 to 479, and aspartate 493; these read TMGP, DGTTT, and NAA.

It belongs to the chaperonin (HSP60) family. Forms a cylinder of 14 subunits composed of two heptameric rings stacked back-to-back. Interacts with the co-chaperonin GroES.

The protein localises to the cytoplasm. The enzyme catalyses ATP + H2O + a folded polypeptide = ADP + phosphate + an unfolded polypeptide.. In terms of biological role, together with its co-chaperonin GroES, plays an essential role in assisting protein folding. The GroEL-GroES system forms a nano-cage that allows encapsulation of the non-native substrate proteins and provides a physical environment optimized to promote and accelerate protein folding. In Sulfurovum sp. (strain NBC37-1), this protein is Chaperonin GroEL.